Reading from the N-terminus, the 135-residue chain is Glutaredoxin-C5 (135 aa).

The Glutaredoxin domain maps to 29-134 (AERVERLASE…PLLKEAGALW (106 aa)). An intrachain disulfide couples Cys49 to Cys52. The Responsive for interaction with TGA factors signature appears at 132 to 135 (ALWL).

This sequence belongs to the glutaredoxin family. CC-type subfamily.

It localises to the cytoplasm. It is found in the nucleus. In terms of biological role, has a glutathione-disulfide oxidoreductase activity in the presence of NADPH and glutathione reductase. Reduces low molecular weight disulfides and proteins. The chain is Glutaredoxin-C5 (GRXC5) from Oryza sativa subsp. japonica (Rice).